Reading from the N-terminus, the 169-residue chain is X polypeptide (169 aa).

The protein belongs to the IagB/IpgF/P19 family.

The protein is X polypeptide (X) of Escherichia coli.